Here is a 586-residue protein sequence, read N- to C-terminus: Phosphomethylpyrimidine synthase (586 aa).

The disordered stretch occupies residues 1–58; that stretch reads MKQSVSAEQIELKSSLPGSKKVYVDGPREGMKVPMREIEQSDTNGVPNPPIRVYDTSG. A compositionally biased stretch (basic and acidic residues) spans 22–39; the sequence is VYVDGPREGMKVPMREIE. Substrate is bound by residues Asn193, Met222, Tyr251, His287, 307 to 309, 348 to 351, and Glu387; these read SRG and DGLR. Residue His391 coordinates Zn(2+). Tyr414 contributes to the substrate binding site. His455 is a Zn(2+) binding site. Residues Cys535, Cys538, and Cys543 each contribute to the [4Fe-4S] cluster site.

This sequence belongs to the ThiC family. Requires [4Fe-4S] cluster as cofactor.

It carries out the reaction 5-amino-1-(5-phospho-beta-D-ribosyl)imidazole + S-adenosyl-L-methionine = 4-amino-2-methyl-5-(phosphooxymethyl)pyrimidine + CO + 5'-deoxyadenosine + formate + L-methionine + 3 H(+). It functions in the pathway cofactor biosynthesis; thiamine diphosphate biosynthesis. In terms of biological role, catalyzes the synthesis of the hydroxymethylpyrimidine phosphate (HMP-P) moiety of thiamine from aminoimidazole ribotide (AIR) in a radical S-adenosyl-L-methionine (SAM)-dependent reaction. The polypeptide is Phosphomethylpyrimidine synthase (Bacillus anthracis (strain A0248)).